The following is a 314-amino-acid chain: Malate dehydrogenase (314 aa).

NAD(+) is bound by residues 13–18 (GGGQIG) and D37. Residues R88 and R94 each contribute to the substrate site. NAD(+)-binding positions include N101 and 124 to 126 (VAN). Substrate is bound by residues N126 and R157. Residue H181 is the Proton acceptor of the active site.

The protein belongs to the LDH/MDH superfamily. MDH type 3 family.

It carries out the reaction (S)-malate + NAD(+) = oxaloacetate + NADH + H(+). Catalyzes the reversible oxidation of malate to oxaloacetate. In Myxococcus xanthus, this protein is Malate dehydrogenase.